Here is a 292-residue protein sequence, read N- to C-terminus: Ribosomal protein L11 methyltransferase (292 aa).

Positions 144, 165, 187, and 229 each coordinate S-adenosyl-L-methionine.

It belongs to the methyltransferase superfamily. PrmA family.

It localises to the cytoplasm. It carries out the reaction L-lysyl-[protein] + 3 S-adenosyl-L-methionine = N(6),N(6),N(6)-trimethyl-L-lysyl-[protein] + 3 S-adenosyl-L-homocysteine + 3 H(+). Its function is as follows. Methylates ribosomal protein L11. This chain is Ribosomal protein L11 methyltransferase, found in Pseudomonas putida (strain W619).